An 84-amino-acid chain; its full sequence is Peptide Ctry2346 (84 aa).

Residues 1–23 (MKTQTLLFTFSLVLLMVATQTEA) form the signal peptide. A Leucine amide modification is found at L33. Positions 37–84 (GLLDNLLGKRGLLFGKRALTNQDLFDLAYDPSLSAADMDALEMLLENY) are excised as a propeptide.

It belongs to the non-disulfide-bridged peptide (NDBP) superfamily. Short antimicrobial peptide (group 4) family. Expressed by the venom gland.

The protein localises to the secreted. Its subcellular location is the target cell membrane. Its function is as follows. Antimicrobial peptide. The chain is Peptide Ctry2346 from Chaerilus tryznai (Scorpion).